A 710-amino-acid chain; its full sequence is Protein CNGC15a (710 aa).

6 helical membrane-spanning segments follow: residues 85-105 (IFLA…YLPV), 115-135 (SIGL…FYII), 174-194 (LWSD…AVIP), 207-226 (VVRL…IYPL), 248-268 (YLTL…LLSI), and 368-388 (AEIN…ALLI). 474 to 559 (LFDQMDDRML…WALDPRPTAV (86 aa)) is a binding site for a nucleoside 3',5'-cyclic phosphate.

This sequence belongs to the cyclic nucleotide-gated cation channel (TC 1.A.1.5) family. As to quaternary structure, interacts (via N-terminus) with DMI1 (via c-terminus). The Nod factor has no effect on this interaction, implying that the complex is maintained after activation. As to expression, expressed in roots, stems, leaves, flowers and pods.

It localises to the nucleus membrane. Functionally, cyclic nucleotide-gated channel involved in the establishment of both rhizobial and mycorrhizal associations. Required for full activation of nuclear-localized Ca(2+) oscillations by Nod and Myc factors. Simultaneous activation of the K(+)-permeable channel DMI1 and the Ca(2+) channel CNGC15 can give rise to sustained Ca(2+) oscillations. May function during fertilization in both female and male gametophytic Ca(2+) signaling. The polypeptide is Protein CNGC15a (Medicago truncatula (Barrel medic)).